A 529-amino-acid chain; its full sequence is Cytochrome P450 monooxygenase ausG (529 aa).

Residues 31–51 (FLVTCGLPWLLLLFSVTIILF) form a helical membrane-spanning segment. C470 lines the heme pocket.

Belongs to the cytochrome P450 family. Heme is required as a cofactor.

The protein localises to the membrane. It participates in secondary metabolite biosynthesis; terpenoid biosynthesis. Its function is as follows. Cytochrome P450 monooxygenase; part of the gene cluster B that mediates the biosynthesis of austinol and dehydroaustinol, two fungal meroterpenoids. The first step of the pathway is the synthesis of 3,5-dimethylorsellinic acid by the polyketide synthase ausA. 3,5-dimethylorsellinic acid is then prenylated by the polyprenyl transferase ausN. Further epoxidation by the FAD-dependent monooxygenase ausM and cyclization by the probable terpene cyclase ausL lead to the formation of protoaustinoid A. Protoaustinoid A is then oxidized to spiro-lactone preaustinoid A3 by the combined action of the FAD-binding monooxygenases ausB and ausC, and the dioxygenase ausE. Acid-catalyzed keto-rearrangement and ring contraction of the tetraketide portion of preaustinoid A3 by ausJ lead to the formation of preaustinoid A4. The aldo-keto reductase ausK, with the help of ausH, is involved in the next step by transforming preaustinoid A4 into isoaustinone which is in turn hydroxylated by the P450 monooxygenase ausI to form austinolide. Finally, the cytochrome P450 monooxygenase ausG modifies austinolide to austinol. Austinol can be further modified to dehydroaustinol which forms a diffusible complex with diorcinol that initiates conidiation. Due to genetic rearrangements of the clusters and the subsequent loss of some enzymes, the end products of the Emericella nidulans austinoid biosynthesis clusters are austinol and dehydroaustinol, even if additional enzymes, such as the O-acetyltransferase ausQ and the cytochrome P450 monooxygenase ausR are still functional. This Emericella nidulans (strain FGSC A4 / ATCC 38163 / CBS 112.46 / NRRL 194 / M139) (Aspergillus nidulans) protein is Cytochrome P450 monooxygenase ausG.